The primary structure comprises 403 residues: MANDFLFTSESVSEGHPDKVADQISDAILDALLRQDPRSRVAAETLTNTGLVVLAGEISTNAHVDYIQVARDTIRRIGYDDTDYGIDYKGCAVLVAYDKQSNDIAQGVDHASDDHLNTGAGDQGLMFGYACDETPELMPAPIYYAHRLVERQAQLRKDGRLPFLRPDAKSQVTLRYVDGKPHSIDTVVLSTQHHPDQSATATTMKQSFIDAVIEEIIRPVLPKEWLHDTRFLINPTGRFVTGGPQGDCGLTGRKIIVDTYGGACPHGGGAFSGKDPTKVDRSAAYAARHVAKNVVAAGLARQCQIQVAYAIGVAEPMNITVYTEGTGVIADERIAALIKQHFDLRPRGIIQMLDLLRPIYEKTAAYGHFGREEPEFTWERTDKAAALRAAAGLSPGEHHRKEG.

Position 16 (His16) interacts with ATP. Asp18 contacts Mg(2+). K(+) is bound at residue Glu44. Glu57 and Gln100 together coordinate L-methionine. Residues 100-110 (QSNDIAQGVDH) form a flexible loop region. ATP is bound by residues 167–169 (DAK), 238–239 (RF), Asp247, 253–254 (RK), Ala270, and Lys274. Asp247 is an L-methionine binding site. Lys278 is an L-methionine binding site.

This sequence belongs to the AdoMet synthase family. As to quaternary structure, homotetramer; dimer of dimers. The cofactor is Mg(2+). Requires K(+) as cofactor.

It localises to the cytoplasm. It catalyses the reaction L-methionine + ATP + H2O = S-adenosyl-L-methionine + phosphate + diphosphate. The protein operates within amino-acid biosynthesis; S-adenosyl-L-methionine biosynthesis; S-adenosyl-L-methionine from L-methionine: step 1/1. Its function is as follows. Catalyzes the formation of S-adenosylmethionine (AdoMet) from methionine and ATP. The overall synthetic reaction is composed of two sequential steps, AdoMet formation and the subsequent tripolyphosphate hydrolysis which occurs prior to release of AdoMet from the enzyme. This chain is S-adenosylmethionine synthase, found in Verminephrobacter eiseniae (strain EF01-2).